Consider the following 393-residue polypeptide: Dual-specificity RNA methyltransferase RlmN (393 aa).

The active-site Proton acceptor is glutamate 114. A Radical SAM core domain is found at 120–359 (EDDRATLCVS…VIVRKTRGDD (240 aa)). Cysteine 127 and cysteine 364 are disulfide-bonded. The [4Fe-4S] cluster site is built by cysteine 134, cysteine 138, and cysteine 141. Residues 188-189 (GE), serine 220, 242-244 (SLH), and asparagine 321 each bind S-adenosyl-L-methionine. Catalysis depends on cysteine 364, which acts as the S-methylcysteine intermediate.

It belongs to the radical SAM superfamily. RlmN family. [4Fe-4S] cluster serves as cofactor.

It is found in the cytoplasm. The catalysed reaction is adenosine(2503) in 23S rRNA + 2 reduced [2Fe-2S]-[ferredoxin] + 2 S-adenosyl-L-methionine = 2-methyladenosine(2503) in 23S rRNA + 5'-deoxyadenosine + L-methionine + 2 oxidized [2Fe-2S]-[ferredoxin] + S-adenosyl-L-homocysteine. It catalyses the reaction adenosine(37) in tRNA + 2 reduced [2Fe-2S]-[ferredoxin] + 2 S-adenosyl-L-methionine = 2-methyladenosine(37) in tRNA + 5'-deoxyadenosine + L-methionine + 2 oxidized [2Fe-2S]-[ferredoxin] + S-adenosyl-L-homocysteine. Functionally, specifically methylates position 2 of adenine 2503 in 23S rRNA and position 2 of adenine 37 in tRNAs. m2A2503 modification seems to play a crucial role in the proofreading step occurring at the peptidyl transferase center and thus would serve to optimize ribosomal fidelity. The sequence is that of Dual-specificity RNA methyltransferase RlmN from Actinobacillus pleuropneumoniae serotype 3 (strain JL03).